The primary structure comprises 545 residues: Chaperonin GroEL 2 (545 aa).

ATP is bound by residues 30-33 (TLGP), lysine 51, 87-91 (DGTTT), glycine 415, and aspartate 494. The segment at 526–545 (EKGAGMPGMPPGGGYPGMGM) is disordered. Residues 536-545 (PGGGYPGMGM) are compositionally biased toward gly residues.

Belongs to the chaperonin (HSP60) family. As to quaternary structure, forms a cylinder of 14 subunits composed of two heptameric rings stacked back-to-back. Interacts with the co-chaperonin GroES.

It localises to the cytoplasm. It carries out the reaction ATP + H2O + a folded polypeptide = ADP + phosphate + an unfolded polypeptide.. In terms of biological role, together with its co-chaperonin GroES, plays an essential role in assisting protein folding. The GroEL-GroES system forms a nano-cage that allows encapsulation of the non-native substrate proteins and provides a physical environment optimized to promote and accelerate protein folding. The protein is Chaperonin GroEL 2 of Syntrophus aciditrophicus (strain SB).